We begin with the raw amino-acid sequence, 360 residues long: Peptide chain release factor 1 (360 aa).

Residue glutamine 237 is modified to N5-methylglutamine.

Belongs to the prokaryotic/mitochondrial release factor family. Post-translationally, methylated by PrmC. Methylation increases the termination efficiency of RF1.

It is found in the cytoplasm. In terms of biological role, peptide chain release factor 1 directs the termination of translation in response to the peptide chain termination codons UAG and UAA. The polypeptide is Peptide chain release factor 1 (Saccharophagus degradans (strain 2-40 / ATCC 43961 / DSM 17024)).